A 219-amino-acid polypeptide reads, in one-letter code: Putative ankyrin repeat protein BB_0399 (219 aa).

3 ANK repeats span residues 104 to 133 (YKISPISISIINNEFEITKILIDYGISLNQ), 137 to 166 (TGYSPIFWAIYTNNEKIFEFLKESGADLSF), and 170 to 199 (NRKTPMQAAIETENIKLIKSLEKKKIYIDD).

This is Putative ankyrin repeat protein BB_0399 from Borreliella burgdorferi (strain ATCC 35210 / DSM 4680 / CIP 102532 / B31) (Borrelia burgdorferi).